Consider the following 594-residue polypeptide: Putative phospholipase B-like 2 (594 aa).

The first 46 residues, 1–46 (MAAPVDGSSGGWAARALRRALALTSLTTLALLASLTGLLLSGPAGA), serve as a signal peptide directing secretion. Residues Asn-93 and Asn-115 are each glycosylated (N-linked (GlcNAc...) asparagine). A disulfide bridge links Cys-147 with Cys-157. N-linked (GlcNAc...) asparagine glycosylation is found at Asn-236 and Asn-441. A disulfide bridge connects residues Cys-497 and Cys-500. Residue Asn-520 is glycosylated (N-linked (GlcNAc...) asparagine).

This sequence belongs to the phospholipase B-like family. Interacts with IGF2R. In terms of processing, the p76 protein is synthesized as a 76 kDa precursor which is then processed into a N-terminal 28 kDa form and a C-terminal 40 kDa form. The C-terminal peptide is further processed into a 15 kDa form. Glycosylated; contains mannose 6-phosphate sugars. Present at highest levels in spleen, lung and brain (at protein level).

Its subcellular location is the lysosome lumen. In terms of biological role, putative phospholipase. This chain is Putative phospholipase B-like 2 (Plbd2), found in Mus musculus (Mouse).